The primary structure comprises 130 residues: Protein ApaG (130 aa).

Positions 3–127 constitute an ApaG domain; sequence RAVTRGIEVS…FSLDIPEQRR (125 aa).

The sequence is that of Protein ApaG from Brucella anthropi (strain ATCC 49188 / DSM 6882 / CCUG 24695 / JCM 21032 / LMG 3331 / NBRC 15819 / NCTC 12168 / Alc 37) (Ochrobactrum anthropi).